The sequence spans 448 residues: Glutamyl-tRNA reductase (448 aa).

Substrate is bound by residues 48–51 (TCNR), Ser-100, 105–107 (EDQ), and Gln-111. Residue Cys-49 is the Nucleophile of the active site. 180 to 185 (GAGEIG) provides a ligand contact to NADP(+).

It belongs to the glutamyl-tRNA reductase family. In terms of assembly, homodimer.

It catalyses the reaction (S)-4-amino-5-oxopentanoate + tRNA(Glu) + NADP(+) = L-glutamyl-tRNA(Glu) + NADPH + H(+). It participates in porphyrin-containing compound metabolism; protoporphyrin-IX biosynthesis; 5-aminolevulinate from L-glutamyl-tRNA(Glu): step 1/2. Its function is as follows. Catalyzes the NADPH-dependent reduction of glutamyl-tRNA(Glu) to glutamate 1-semialdehyde (GSA). The sequence is that of Glutamyl-tRNA reductase from Methanosarcina mazei (strain ATCC BAA-159 / DSM 3647 / Goe1 / Go1 / JCM 11833 / OCM 88) (Methanosarcina frisia).